Reading from the N-terminus, the 530-residue chain is tRNA-2-methylthio-N(6)-dimethylallyladenosine synthase (530 aa).

The MTTase N-terminal domain occupies 19-134 (RTYEVRTYGC…LPTLLERARH (116 aa)). [4Fe-4S] cluster is bound by residues C28, C63, C97, C171, C175, and C178. The Radical SAM core domain maps to 157 to 387 (RDEIASGWVS…TALQERISHE (231 aa)). Residues 390-460 (QRVVGRTVEV…PFHLIADSVD (71 aa)) enclose the TRAM domain. The interval 509–530 (VPTTASTSAPVGDGSAHPRHRA) is disordered.

This sequence belongs to the methylthiotransferase family. MiaB subfamily. As to quaternary structure, monomer. The cofactor is [4Fe-4S] cluster.

It is found in the cytoplasm. It carries out the reaction N(6)-dimethylallyladenosine(37) in tRNA + (sulfur carrier)-SH + AH2 + 2 S-adenosyl-L-methionine = 2-methylsulfanyl-N(6)-dimethylallyladenosine(37) in tRNA + (sulfur carrier)-H + 5'-deoxyadenosine + L-methionine + A + S-adenosyl-L-homocysteine + 2 H(+). Its function is as follows. Catalyzes the methylthiolation of N6-(dimethylallyl)adenosine (i(6)A), leading to the formation of 2-methylthio-N6-(dimethylallyl)adenosine (ms(2)i(6)A) at position 37 in tRNAs that read codons beginning with uridine. The polypeptide is tRNA-2-methylthio-N(6)-dimethylallyladenosine synthase (Clavibacter sepedonicus (Clavibacter michiganensis subsp. sepedonicus)).